A 647-amino-acid polypeptide reads, in one-letter code: Threonine--tRNA ligase (647 aa).

The region spanning 1 to 61 is the TGS domain; it reads MINITFPDGA…TEDGSIEIVT (61 aa). The interval 242–540 is catalytic; it reads DHRKLGKELD…LIENYKGAFP (299 aa). Zn(2+) contacts are provided by Cys336, His387, and His517.

The protein belongs to the class-II aminoacyl-tRNA synthetase family. As to quaternary structure, homodimer. Zn(2+) serves as cofactor.

It localises to the cytoplasm. The enzyme catalyses tRNA(Thr) + L-threonine + ATP = L-threonyl-tRNA(Thr) + AMP + diphosphate + H(+). Catalyzes the attachment of threonine to tRNA(Thr) in a two-step reaction: L-threonine is first activated by ATP to form Thr-AMP and then transferred to the acceptor end of tRNA(Thr). Also edits incorrectly charged L-seryl-tRNA(Thr). The sequence is that of Threonine--tRNA ligase from Streptococcus pneumoniae (strain 70585).